The chain runs to 223 residues: Small ribosomal subunit protein uS3 (223 aa).

A KH type-2 domain is found at isoleucine 38 to arginine 106.

This sequence belongs to the universal ribosomal protein uS3 family. Part of the 30S ribosomal subunit. Forms a tight complex with proteins S10 and S14.

Functionally, binds the lower part of the 30S subunit head. Binds mRNA in the 70S ribosome, positioning it for translation. The polypeptide is Small ribosomal subunit protein uS3 (Rhodospirillum rubrum (strain ATCC 11170 / ATH 1.1.1 / DSM 467 / LMG 4362 / NCIMB 8255 / S1)).